We begin with the raw amino-acid sequence, 250 residues long: HTH-type transcriptional regulator SarS (250 aa).

2 consecutive DNA-binding regions (H-T-H motif) follow at residues 53-76 and 177-200; these read FKKI…VLVK and LKDL…NLKK.

The protein belongs to the SarA family.

The protein localises to the cytoplasm. Its function is as follows. Transcriptional regulator that controls expression of some virulence factors in a cell density-dependent manner. The sequence is that of HTH-type transcriptional regulator SarS (sarS) from Staphylococcus aureus (strain MRSA252).